A 257-amino-acid polypeptide reads, in one-letter code: 5'-nucleotidase SurE (257 aa).

4 residues coordinate a divalent metal cation: Asp-15, Asp-16, Ser-46, and Asn-99.

Belongs to the SurE nucleotidase family. Requires a divalent metal cation as cofactor.

The protein resides in the cytoplasm. The catalysed reaction is a ribonucleoside 5'-phosphate + H2O = a ribonucleoside + phosphate. Its function is as follows. Nucleotidase that shows phosphatase activity on nucleoside 5'-monophosphates. The protein is 5'-nucleotidase SurE of Aliivibrio fischeri (strain ATCC 700601 / ES114) (Vibrio fischeri).